The chain runs to 242 residues: MSDDFAESVTEANAESDTETAADAESSAAEDASAADDAAPEESTGDEQAGETTAESSDAESVTVSERVAEYDDELAAEVEALEARVADLEASVADLETERDEAEETASDLESRLKRTQADFQNYKKRAKKRQQQIKERATEDFVERVVTVRDNLVRALDQDEDADIRDGIESTLKEFDRILEDENVEIIDPEPGTDVDPTRHEVMMRVESDQPADTIADVFQPGYEMAEKVIRAAQVTVSKE.

Disordered stretches follow at residues 1–75 (MSDD…DDEL) and 93–136 (VADL…QQIK). Residues 23-37 (DAESSAAEDASAADD) are compositionally biased toward low complexity. Over residues 38 to 49 (AAPEESTGDEQA) the composition is skewed to acidic residues. The span at 50–64 (GETTAESSDAESVTV) shows a compositional bias: polar residues. The segment covering 96–108 (LETERDEAEETAS) has biased composition (acidic residues). The segment covering 124 to 133 (YKKRAKKRQQ) has biased composition (basic residues).

This sequence belongs to the GrpE family. In terms of assembly, homodimer.

The protein resides in the cytoplasm. Participates actively in the response to hyperosmotic and heat shock by preventing the aggregation of stress-denatured proteins, in association with DnaK and GrpE. It is the nucleotide exchange factor for DnaK and may function as a thermosensor. Unfolded proteins bind initially to DnaJ; upon interaction with the DnaJ-bound protein, DnaK hydrolyzes its bound ATP, resulting in the formation of a stable complex. GrpE releases ADP from DnaK; ATP binding to DnaK triggers the release of the substrate protein, thus completing the reaction cycle. Several rounds of ATP-dependent interactions between DnaJ, DnaK and GrpE are required for fully efficient folding. This Haloferax mediterranei (strain ATCC 33500 / DSM 1411 / JCM 8866 / NBRC 14739 / NCIMB 2177 / R-4) (Halobacterium mediterranei) protein is Protein GrpE.